Reading from the N-terminus, the 282-residue chain is Probable septum site-determining protein MinC (282 aa).

Residues 103–147 (SQSRRGGKDEAPKEKAGKPEATAASGQTDAEAAGNTGKGKDSEGA) are disordered. Residues 104–120 (QSRRGGKDEAPKEKAGK) show a composition bias toward basic and acidic residues.

Belongs to the MinC family. As to quaternary structure, interacts with MinD and FtsZ.

In terms of biological role, cell division inhibitor that blocks the formation of polar Z ring septums. Rapidly oscillates between the poles of the cell to destabilize FtsZ filaments that have formed before they mature into polar Z rings. Prevents FtsZ polymerization. The polypeptide is Probable septum site-determining protein MinC (Cupriavidus metallidurans (strain ATCC 43123 / DSM 2839 / NBRC 102507 / CH34) (Ralstonia metallidurans)).